Reading from the N-terminus, the 228-residue chain is 5'-methylthioadenosine/S-adenosylhomocysteine nucleosidase (228 aa).

The active-site Proton acceptor is the Glu11. Substrate-binding positions include Gly77, Ile151, and 172 to 173; that span reads ME. Asp196 acts as the Proton donor in catalysis.

This sequence belongs to the PNP/UDP phosphorylase family. MtnN subfamily.

The enzyme catalyses S-adenosyl-L-homocysteine + H2O = S-(5-deoxy-D-ribos-5-yl)-L-homocysteine + adenine. It catalyses the reaction S-methyl-5'-thioadenosine + H2O = 5-(methylsulfanyl)-D-ribose + adenine. It carries out the reaction 5'-deoxyadenosine + H2O = 5-deoxy-D-ribose + adenine. The protein operates within amino-acid biosynthesis; L-methionine biosynthesis via salvage pathway; S-methyl-5-thio-alpha-D-ribose 1-phosphate from S-methyl-5'-thioadenosine (hydrolase route): step 1/2. Its function is as follows. Catalyzes the irreversible cleavage of the glycosidic bond in both 5'-methylthioadenosine (MTA) and S-adenosylhomocysteine (SAH/AdoHcy) to adenine and the corresponding thioribose, 5'-methylthioribose and S-ribosylhomocysteine, respectively. Also cleaves 5'-deoxyadenosine, a toxic by-product of radical S-adenosylmethionine (SAM) enzymes, into 5-deoxyribose and adenine. This chain is 5'-methylthioadenosine/S-adenosylhomocysteine nucleosidase, found in Staphylococcus haemolyticus (strain JCSC1435).